Consider the following 512-residue polypeptide: Mesoderm induction early response protein 1 (512 aa).

A compositionally biased stretch (low complexity) spans 1–16; sequence MAEPSVESSSPGGSAT. Disordered stretches follow at residues 1–63 and 75–173; these read MAEP…REGD and YGST…EDYI. Serine 10 is subject to Phosphoserine. The segment covering 17 to 36 has biased composition (basic and acidic residues); it reads SDDHEFDPSADMLVHDFDDE. Acidic residues-rich tracts occupy residues 37 to 46 and 83 to 105; these read RTLEEEEMME and EEDE…DNDD. The span at 129–144 shows a compositional bias: polar residues; it reads QSSNDDPSQSVASQDA. At serine 141 the chain carries Phosphoserine. Tyrosine 155 is modified (phosphotyrosine). Residues serine 160 and serine 166 each carry the phosphoserine modification. Residues 160-173 show a composition bias toward acidic residues; that stretch reads SEVEEESEEDEDYI. One can recognise an ELM2 domain in the interval 180–278; it reads KEIMVGSMFQ…EALRRLRFNV (99 aa). The tract at residues 180 to 284 is interaction with HDAC1; that stretch reads KEIMVGSMFQ…RFNVKAAREE (105 aa). A Glycyl lysine isopeptide (Lys-Gly) (interchain with G-Cter in SUMO2) cross-link involves residue lysine 239. The 53-residue stretch at 283-335 folds into the SANT domain; the sequence is EELSVWTEEECRNFEQGLKAYGKDFHLIQANKVRTRSVGECVAFYYMWKKSER. The interval 366-512 is disordered; that stretch reads ESESAASSRA…KFEELENTDD (147 aa). 3 positions are modified to phosphoserine: serine 367, serine 369, and serine 377. Residues 396–409 show a composition bias toward polar residues; sequence TVSTTNQNGVSSNG. Residues 414–423 show a composition bias toward basic and acidic residues; sequence LNKEEVKVEG. Lysine 420 is covalently cross-linked (Glycyl lysine isopeptide (Lys-Gly) (interchain with G-Cter in SUMO2)). Threonine 448 carries the phosphothreonine modification. Positions 462–475 are enriched in basic and acidic residues; sequence ARNENDFDEKSERP. Residues 482–494 are compositionally biased toward polar residues; the sequence is NSNGKESPGSSEF. Phosphoserine is present on residues serine 483, serine 488, and serine 491.

Interacts with HDAC1. Part of a complex containing at least CDYL, MIER1, MIER2, HDAC1 and HDAC2.

The protein localises to the nucleus. Transcriptional repressor regulating the expression of a number of genes including SP1 target genes. Probably functions through recruitment of HDAC1 a histone deacetylase involved in chromatin silencing. The sequence is that of Mesoderm induction early response protein 1 (MIER1) from Pongo abelii (Sumatran orangutan).